The primary structure comprises 420 residues: D-tagatose-1,6-bisphosphate aldolase subunit GatZ (420 aa).

Belongs to the GatZ/KbaZ family. GatZ subfamily. In terms of assembly, forms a complex with GatY.

Its pathway is carbohydrate metabolism; D-tagatose 6-phosphate degradation; D-glyceraldehyde 3-phosphate and glycerone phosphate from D-tagatose 6-phosphate: step 2/2. Its function is as follows. Component of the tagatose-1,6-bisphosphate aldolase GatYZ that is required for full activity and stability of the Y subunit. Could have a chaperone-like function for the proper and stable folding of GatY. When expressed alone, GatZ does not show any aldolase activity. Is involved in the catabolism of galactitol. The chain is D-tagatose-1,6-bisphosphate aldolase subunit GatZ from Escherichia coli (strain SE11).